The primary structure comprises 91 residues: DNA-directed RNA polymerase subunit omega (91 aa).

This sequence belongs to the RNA polymerase subunit omega family. In terms of assembly, the RNAP catalytic core consists of 2 alpha, 1 beta, 1 beta' and 1 omega subunit. When a sigma factor is associated with the core the holoenzyme is formed, which can initiate transcription.

It carries out the reaction RNA(n) + a ribonucleoside 5'-triphosphate = RNA(n+1) + diphosphate. Functionally, promotes RNA polymerase assembly. Latches the N- and C-terminal regions of the beta' subunit thereby facilitating its interaction with the beta and alpha subunits. In Aeromonas hydrophila subsp. hydrophila (strain ATCC 7966 / DSM 30187 / BCRC 13018 / CCUG 14551 / JCM 1027 / KCTC 2358 / NCIMB 9240 / NCTC 8049), this protein is DNA-directed RNA polymerase subunit omega.